Reading from the N-terminus, the 1115-residue chain is Scavenger receptor cysteine-rich type 1 protein M130 (1115 aa).

The signal sequence occupies residues 1–46 (MDKLRMVLHENSGSADFRRCSAHLSSFTFAVVAVLSACLVTSSLGG). The Extracellular portion of the chain corresponds to 47 to 1044 (KDKELRLTGG…ESLHATGRSS (998 aa)). 9 consecutive SRCR domains span residues 51–151 (LRLT…VTCS), 158–258 (MGLV…VICL), 265–365 (LRVV…VTCS), 372–472 (LRLK…ITCS), 477–577 (PRLV…VVCS), 582–682 (IRLV…VICS), 718–818 (LRLV…VICS), 823–925 (LRLI…ITCA), and 928–1028 (IRLQ…VTCS). 23 disulfides stabilise this stretch: Cys76/Cys140, Cys89/Cys150, Cys120/Cys130, Cys183/Cys247, Cys196/Cys257, Cys227/Cys237, Cys290/Cys354, Cys303/Cys364, Cys334/Cys344, Cys397/Cys461, Cys410/Cys471, Cys441/Cys451, Cys502/Cys566, Cys515/Cys576, Cys546/Cys556, Cys607/Cys671, Cys620/Cys681, Cys651/Cys661, Cys743/Cys807, Cys756/Cys817, Cys787/Cys797, Cys863/Cys924, and Cys894/Cys904. Asn105 carries N-linked (GlcNAc...) asparagine glycosylation. Asn139 carries an N-linked (GlcNAc...) asparagine glycan. The N-linked (GlcNAc...) asparagine glycan is linked to Asn936. Intrachain disulfides connect Cys953-Cys1017, Cys966-Cys1027, and Cys997-Cys1007. Residues 1045-1065 (FVALAIFGVILLACLIAFLIW) traverse the membrane as a helical segment. Residues 1066-1115 (TQKRRQRQRLSVFSGGENSVHQIQYREMNSCLKADETDMLNPSGDHSEVQ) are Cytoplasmic-facing. An Internalization signal motif is present at residues 1090–1093 (YREM).

Interacts with CSNK2B. Post-translationally, a soluble form (sCD163) is produced by proteolytic shedding which can be induced by lipopolysaccharide, phorbol ester and Fc region of immunoglobulin gamma. This cleavage is dependent on protein kinase C and tyrosine kinases and can be blocked by protease inhibitors. The shedding is inhibited by the tissue inhibitor of metalloproteinase TIMP3, and thus probably induced by membrane-bound metalloproteinases ADAMs. Phosphorylated. As to expression, expressed in monocytes and macrophages. Detected only in one population of monocytes (CD163+) which is in advanced maturation stage.

It localises to the secreted. It is found in the cell membrane. In terms of biological role, involved in clearance and endocytosis of hemoglobin/haptoglobin complexes by macrophages and may thereby protect tissues from free hemoglobin-mediated oxidative damage. May play a role in the uptake and recycling of iron, via endocytosis of hemoglobin/haptoglobin and subsequent breakdown of heme. Binds hemoglobin/haptoglobin complexes in a calcium-dependent and pH-dependent manner. Induces a cascade of intracellular signals that involves tyrosine kinase-dependent calcium mobilization, inositol triphosphate production and secretion of IL6 and CSF1. May play a role in the process of infection of porcine monocytes/macrophages by African swine fever virus (ASFV). In case of porcine reproductive and respiratory syndrome virus (PRRSV), serves mediates virion attachment and plays a role in viral entry. Its function is as follows. After shedding, the soluble form (sCD163) may play an anti-inflammatory role. In Sus scrofa (Pig), this protein is Scavenger receptor cysteine-rich type 1 protein M130 (CD163).